The following is a 561-amino-acid chain: Putative transport protein YbjL (561 aa).

5 consecutive transmembrane segments (helical) span residues 8 to 28 (LLNGNYILLLFVVLALGLCLG), 32 to 52 (LGSVQLGNSIGVLVVSLLLGQ), 66 to 86 (FMLFIFCVGVEAGPNFFSIFF), 94 to 114 (MLALVMVGSALLIALGLGKLF), and 158 to 178 (NLSLGYALTYLIGLVSLIVGA). RCK C-terminal domains follow at residues 200–288 (RGLD…SFRN) and 292–373 (VFDR…RIGF). Helical transmembrane passes span 383–403 (LLAFCAFFIIGLMIGMITFQF), 406–426 (FSFGIGNAAGLLFAGIMLGFL), 447–467 (FGLMVFMAGVGLSAGSGINNG), 475–495 (MLIAGLVVSLVPVVICFLFGA), and 537–557 (GTYAIANVLLTLAGTLIVIIW).

It belongs to the AAE transporter (TC 2.A.81) family. YbjL subfamily.

Its subcellular location is the cell membrane. This is Putative transport protein YbjL from Salmonella choleraesuis (strain SC-B67).